We begin with the raw amino-acid sequence, 157 residues long: MLRNRTDAVHDRVRFSIGTRVMSSWSIVVWMFHRQTWQFLLTTGFILCISSIAWSAEVHQMELTHHEFEPWSFVPKPGDRIDIHNHSDIVHAIYVTYPNGIVVNLSETAAQLPGMTVSWTVPEDAEDGDEYVLQCWIHTIIRAALKVKAPLSQLPEP.

The protein operates within one-carbon metabolism; methylamine degradation. In terms of biological role, probably involved in TTQ prosthetic group biosynthesis. The polypeptide is Methylamine utilization protein MauL (mauL) (Methylobacillus flagellatus (strain ATCC 51484 / DSM 6875 / VKM B-1610 / KT)).